The following is a 102-amino-acid chain: Salivary thrombin inhibitor anophelin (102 aa).

The N-terminal stretch at M1–S21 is a signal peptide. Residues Y25–H102 are disordered. A compositionally biased stretch (polar residues) spans S59 to Q69. Residues D70–R73 are blocks active site cleft of host thrombin in a reverse direction compared to substrates. A compositionally biased stretch (polar residues) spans Q80–P90. Residues S91 to H102 show a composition bias toward low complexity.

The protein belongs to the anophelin family. Interacts with human F2 (thrombin); the interaction results in thrombin inhibition.

It is found in the secreted. In terms of biological role, salivary protein with anticoagulant activity that inhibits host thrombin (F2). The sequence is that of Salivary thrombin inhibitor anophelin from Anopheles funestus (African malaria mosquito).